The following is a 71-amino-acid chain: Disintegrin applaggin (71 aa).

A Disintegrin domain is found at E1–H71. 6 disulfides stabilise this stretch: C6/C21, C8/C16, C15/C38, C29/C35, C34/C58, and C47/C65. The short motif at R50–D52 is the Cell attachment site element.

The protein belongs to the venom metalloproteinase (M12B) family. P-II subfamily. P-IIa sub-subfamily. In terms of assembly, monomer (disintegrin). Expressed by the venom gland.

Its subcellular location is the secreted. Its function is as follows. Inhibits fibrinogen interaction with platelets. Acts by binding to alpha-IIb/beta-3 (ITGA2B/ITGB3) on the platelet surface and inhibits aggregation induced by ADP, thrombin, platelet-activating factor and collagen. The sequence is that of Disintegrin applaggin from Agkistrodon piscivorus piscivorus (Eastern cottonmouth).